We begin with the raw amino-acid sequence, 305 residues long: Probable cell division protein WhiA (305 aa).

Positions 269 to 302 (TIKELGELLDPPLGKSGVNHRLRKLVERSNDLKK) form a DNA-binding region, H-T-H motif.

This sequence belongs to the WhiA family.

Involved in cell division and chromosome segregation. The polypeptide is Probable cell division protein WhiA (Lactococcus lactis subsp. cremoris (strain MG1363)).